The sequence spans 353 residues: Zinc transporter 5 (353 aa).

A signal peptide spans 1-27 (MATAAMTKVFVLLFLVAACYLPAHAAA). The Extracellular portion of the chain corresponds to 28 to 48 (AECDCATDTAGRDKAQALRLK). The chain crosses the membrane as a helical span at residues 49–69 (VIAIFCILAGSTVGAALPSLG). Topologically, residues 70–86 (GRFPAIQPETDVFLSVK) are cytoplasmic. Residues 87 to 107 (AFAGGVILATGLVHILPAAFE) traverse the membrane as a helical segment. The Extracellular segment spans residues 108-121 (ALSSPCLVGGPWKR). Residues 122 to 142 (FPFAGMVAMVSAIGTLIVDTV) form a helical membrane-spanning segment. Residues 143–198 (ATGYFHRTDAKRKAAAVADEPADDLEASDEHSHGHAHGMSVMSVAPAGEEDLVRHR) are Cytoplasmic-facing. A helical membrane pass occupies residues 199-219 (VISQVLELGVVVHSLIIGMSL). Topologically, residues 220-230 (GASDFPSTVRP) are extracellular. The chain crosses the membrane as a helical span at residues 231-251 (LVPALTFHQFFEGIGLGGCIV). Topologically, residues 252 to 260 (QAKFRVRSV) are cytoplasmic. A helical transmembrane segment spans residues 261–281 (VTMALFFSLTTPAGIVVGIGI). Residues 282–292 (SSVYDANSPTA) are Extracellular-facing. The helical transmembrane segment at 293–313 (LVVQGLLEAAAAGILVYMALV) threads the bilayer. Topologically, residues 314-332 (DILAEDFMKTKVQRRGRLQ) are cytoplasmic. A helical transmembrane segment spans residues 333 to 353 (LAMNVALLLGAGLMSMIAIWA).

This sequence belongs to the ZIP transporter (TC 2.A.5) family.

It localises to the cell membrane. Its function is as follows. Zinc transporter that mediates zinc uptake from the rhizosphere and may be responsible for the translocation of zinc within the plant. This Oryza sativa subsp. japonica (Rice) protein is Zinc transporter 5 (ZIP5).